The chain runs to 510 residues: ATP-dependent zinc metalloprotease FtsH 2 (510 aa).

The Cytoplasmic portion of the chain corresponds to 1–4 (MKKN). A helical transmembrane segment spans residues 5-25 (LHIIILALSIFINLLFIYIFI). Residues 26-31 (SEVKPN) are Extracellular-facing. The helical transmembrane segment at 32-52 (LNLNLSFILTAAVIVVTYLLF) threads the bilayer. Over 53-510 (KNKFSELMPV…LWEEENTLCV (458 aa)) the chain is Cytoplasmic. 124 to 131 (GPPGTGKT) lines the ATP pocket. Residue His-343 participates in Zn(2+) binding. The active site involves Glu-344. Zn(2+) is bound by residues His-347 and Asp-418.

It in the central section; belongs to the AAA ATPase family. This sequence in the C-terminal section; belongs to the peptidase M41 family. As to quaternary structure, homohexamer. Zn(2+) is required as a cofactor.

The protein localises to the cell membrane. In terms of biological role, acts as a processive, ATP-dependent zinc metallopeptidase for both cytoplasmic and membrane proteins. Plays a role in the quality control of integral membrane proteins. The polypeptide is ATP-dependent zinc metalloprotease FtsH 2 (Thermoanaerobacter sp. (strain X514)).